The following is a 187-amino-acid chain: Large ribosomal subunit protein uL5 (187 aa).

The protein belongs to the universal ribosomal protein uL5 family. In terms of assembly, part of the 50S ribosomal subunit; part of the 5S rRNA/L5/L18/L25 subcomplex. Contacts the 5S rRNA and the P site tRNA. Forms a bridge to the 30S subunit in the 70S ribosome.

Its function is as follows. This is one of the proteins that bind and probably mediate the attachment of the 5S RNA into the large ribosomal subunit, where it forms part of the central protuberance. In the 70S ribosome it contacts protein S13 of the 30S subunit (bridge B1b), connecting the 2 subunits; this bridge is implicated in subunit movement. Contacts the P site tRNA; the 5S rRNA and some of its associated proteins might help stabilize positioning of ribosome-bound tRNAs. The protein is Large ribosomal subunit protein uL5 of Gluconobacter oxydans (strain 621H) (Gluconobacter suboxydans).